The sequence spans 109 residues: Staphostatin B (109 aa).

The tract at residues 97–101 is binds to staphopain B; it reads IGTSR.

This sequence belongs to the protease inhibitor I57 (SspC) family. As to quaternary structure, forms a stable non-covalent complex with prematurely activated/folded SspB.

The protein localises to the cytoplasm. Its function is as follows. Specifically inhibits the cysteine protease staphopain B (SspB) by blocking the active site of the enzyme. Probably required to protect cytoplasmic proteins from being degraded by prematurely activated/folded prostaphopain B. Also involved in growth capacity, viability and bacterial morphology. This is Staphostatin B (sspC) from Staphylococcus aureus (strain MRSA252).